We begin with the raw amino-acid sequence, 299 residues long: Porphobilinogen deaminase (299 aa).

An S-(dipyrrolylmethanemethyl)cysteine modification is found at cysteine 242.

The protein belongs to the HMBS family. In terms of assembly, monomer. Dipyrromethane serves as cofactor.

It catalyses the reaction 4 porphobilinogen + H2O = hydroxymethylbilane + 4 NH4(+). Its pathway is porphyrin-containing compound metabolism; protoporphyrin-IX biosynthesis; coproporphyrinogen-III from 5-aminolevulinate: step 2/4. Tetrapolymerization of the monopyrrole PBG into the hydroxymethylbilane pre-uroporphyrinogen in several discrete steps. This Rickettsia prowazekii (strain Madrid E) protein is Porphobilinogen deaminase (hemC).